The chain runs to 799 residues: MDLPVDEWKSYLLKKWASLPKSVQDTISTAETLSDIFLPSSSLLQPEDEMFLKELSSSYSVEKDNDAPLFYREEGNRKFQEKEYTDAAVLYSKGVSHSRPNTEDISLCYANRSAALFHLGQYEACLKDIVEAGMHGYPERLQPKMMVRKTECLVNLGRLQEARQTISDLESSLTAKPTLVLSSYQILQRNVQHLKIKIQEKETLPEPIPAALTNAFEDIALGEENTQISGASLSVSLCTHPLKGRHLVATKDILPGELLVKEDAFVSVLIPGEMPRPHHCLENKWDTRVTSGDLYCHRCLKHTLATVPCGSCSYAKYCSQECMQQAWDLYHSTECSLGGLLLTLGVFCHVALRMTLLARFEDVDRVVRMLCDEVGSTDTCLPESKNLVKAFDYTSQGESEEKSKIGEPPIPGCNVNGKYGSNYNAIFSLLPHTEKHSPEHRFICAISVSALCRQLKADSVQAQTLKSPKLKAVTPGLCADLTVWGAAMLRHMLQLQCNAQAITSICHTGSNESIITNSRQIRLATGIFPVVSLLNHSCRPNTSVSFTGTVATVRAAQRIAKGQEILHCYGPHESRMGVAERQQRLSSQYFFDCRCGACHAETLRAAAAPRWEAFCCKTCRALMQGNDVLSCSNESCTNSVSRDQLVSRLQDLQQQVCMAQKLLRTGKPEQAIQQLLRCREAAESFLSAEHTVLGEIEDGLAQAHATLGNWLKSAAHVQKSLQVVETRHGPSSVEIGHELFKLAQVLFNGLAVPEALSAIWKAERILLVHCGPESEEVRELREMRSCLLDSSFVPVGPLV.

112 to 114 provides a ligand contact to S-adenosyl-L-methionine; that stretch reads RSA. The SET domain maps to 233–570; that stretch reads LSVSLCTHPL…KGQEILHCYG (338 aa). Zn(2+)-binding residues include Cys296, Cys299, Cys309, Cys312, Cys318, Cys322, His331, and Cys335. The segment at 296 to 335 adopts an MYND-type zinc-finger fold; sequence CHRCLKHTLATVPCGSCSYAKYCSQECMQQAWDLYHSTEC. Residues 535 to 536, Tyr569, and Phe591 contribute to the S-adenosyl-L-methionine site; that span reads NH.

The protein belongs to the class V-like SAM-binding methyltransferase superfamily. Interacts (via MYND-type zinc finger) with HDAC1.

It is found in the nucleus. It localises to the cytoplasm. The enzyme catalyses L-lysyl-[protein] + S-adenosyl-L-methionine = N(6)-methyl-L-lysyl-[protein] + S-adenosyl-L-homocysteine + H(+). Its function is as follows. Protein-lysine N-methyltransferase. Monomethylates PRMT5, modulating its transcriptional activity. May also act as a histone methyltransferase. Plays a critical role in cardiac development. Acts as a key epigenetic regulator of gene expression during cardiac development via its dual activities as a methyltransferase and negative regulator of HDAC1. In Mus musculus (Mouse), this protein is Protein-lysine N-methyltransferase SMYD4 (Smyd4).